Here is a 354-residue protein sequence, read N- to C-terminus: Pyruvate dehydrogenase E1 component subunit alpha (354 aa).

Positions 1 to 29 (MAKATQDSNRPHKADVGSAIPNHDLPPIP) are disordered.

Heterodimer of an alpha and a beta chain. The cofactor is thiamine diphosphate.

It catalyses the reaction N(6)-[(R)-lipoyl]-L-lysyl-[protein] + pyruvate + H(+) = N(6)-[(R)-S(8)-acetyldihydrolipoyl]-L-lysyl-[protein] + CO2. Its function is as follows. The pyruvate dehydrogenase complex catalyzes the overall conversion of pyruvate to acetyl-CoA and CO(2). It contains multiple copies of three enzymatic components: pyruvate dehydrogenase (E1), dihydrolipoamide acetyltransferase (E2) and lipoamide dehydrogenase (E3). The polypeptide is Pyruvate dehydrogenase E1 component subunit alpha (pdhA) (Zymomonas mobilis subsp. mobilis (strain ATCC 31821 / ZM4 / CP4)).